The sequence spans 448 residues: Glutamyl-tRNA reductase (448 aa).

Substrate contacts are provided by residues 49-52 (TCNR), serine 109, 114-116 (ETQ), and glutamine 120. The active-site Nucleophile is cysteine 50. An NADP(+)-binding site is contributed by 189-194 (GAGEMS).

It belongs to the glutamyl-tRNA reductase family. In terms of assembly, homodimer.

It catalyses the reaction (S)-4-amino-5-oxopentanoate + tRNA(Glu) + NADP(+) = L-glutamyl-tRNA(Glu) + NADPH + H(+). It functions in the pathway porphyrin-containing compound metabolism; protoporphyrin-IX biosynthesis; 5-aminolevulinate from L-glutamyl-tRNA(Glu): step 1/2. Its function is as follows. Catalyzes the NADPH-dependent reduction of glutamyl-tRNA(Glu) to glutamate 1-semialdehyde (GSA). The polypeptide is Glutamyl-tRNA reductase (Staphylococcus aureus (strain NCTC 8325 / PS 47)).